The following is a 251-amino-acid chain: uncharacterized protein (251 aa).

This sequence to M.jannaschii MJ1311.

This is an uncharacterized protein from Methanocaldococcus jannaschii (strain ATCC 43067 / DSM 2661 / JAL-1 / JCM 10045 / NBRC 100440) (Methanococcus jannaschii).